The sequence spans 304 residues: Aspartate carbamoyltransferase catalytic subunit (304 aa).

Residues Arg-57 and Thr-58 each coordinate carbamoyl phosphate. Lys-86 is an L-aspartate binding site. Positions 107, 135, and 138 each coordinate carbamoyl phosphate. L-aspartate-binding residues include Arg-168 and Arg-229. Leu-266 and Pro-267 together coordinate carbamoyl phosphate.

It belongs to the aspartate/ornithine carbamoyltransferase superfamily. ATCase family. As to quaternary structure, heterooligomer of catalytic and regulatory chains.

It carries out the reaction carbamoyl phosphate + L-aspartate = N-carbamoyl-L-aspartate + phosphate + H(+). It participates in pyrimidine metabolism; UMP biosynthesis via de novo pathway; (S)-dihydroorotate from bicarbonate: step 2/3. In terms of biological role, catalyzes the condensation of carbamoyl phosphate and aspartate to form carbamoyl aspartate and inorganic phosphate, the committed step in the de novo pyrimidine nucleotide biosynthesis pathway. The sequence is that of Aspartate carbamoyltransferase catalytic subunit from Methanosphaera stadtmanae (strain ATCC 43021 / DSM 3091 / JCM 11832 / MCB-3).